A 551-amino-acid polypeptide reads, in one-letter code: Formate--tetrahydrofolate ligase (551 aa).

Residue 54-61 (TPPGEGKT) participates in ATP binding.

Belongs to the formate--tetrahydrofolate ligase family.

The catalysed reaction is (6S)-5,6,7,8-tetrahydrofolate + formate + ATP = (6R)-10-formyltetrahydrofolate + ADP + phosphate. It functions in the pathway one-carbon metabolism; tetrahydrofolate interconversion. The protein is Formate--tetrahydrofolate ligase of Myxococcus xanthus (strain DK1622).